Here is a 781-residue protein sequence, read N- to C-terminus: Poly(ADP-ribose) glycohydrolase 1 (781 aa).

Disordered regions lie at residues 28 to 87, 102 to 131, and 206 to 232; these read AHQV…VSEN, SLDN…NNKS, and ADST…DADS. Basic and acidic residues predominate over residues 106–121; that stretch reads VTERSEHTLDNHKSTE.

It belongs to the poly(ADP-ribose) glycohydrolase family. Expressed in head and tail neurons. Also detected in the central nerve cord and motor neurons.

The protein resides in the nucleus. The enzyme catalyses [(1''-&gt;2')-ADP-alpha-D-ribose](n) + H2O = [(1''-&gt;2')-ADP-alpha-D-ribose](n-1) + ADP-D-ribose. Its function is as follows. Poly(ADP-ribose) synthesized after DNA damage is only present transiently and is rapidly degraded by poly(ADP-ribose) glycohydrolase. Poly(ADP-ribose) metabolism may be required for maintenance of the normal function of neuronal cells. This is Poly(ADP-ribose) glycohydrolase 1 from Caenorhabditis elegans.